We begin with the raw amino-acid sequence, 1419 residues long: Multidrug resistance protein 1 (1419 aa).

The r domain; regulates transporter activity stretch occupies residues 1–37; it reads MGKEQKEKKDGNLSIKEEVEKELNKKSTAELFRKIKN. Over 1-60 the chain is Cytoplasmic; that stretch reads MGKEQKEKKDGNLSIKEEVEKELNKKSTAELFRKIKNEKISFFLPFKCLPAQHRKLLFIS. Residues 58-345 form the ABC transmembrane type-1 1 domain; sequence FISFVCAVLS…ILPNITEYMK (288 aa). Residues 61–81 traverse the membrane as a helical segment; sequence FVCAVLSGGTLPFFISVFGVI. Residues 82 to 90 lie on the Vacuolar side of the membrane; that stretch reads LKNMNLGDD. The helical transmembrane segment at 91–111 threads the bilayer; that stretch reads INPIILSLVSIGLVQFILSMI. Residues 112–168 lie on the Cytoplasmic side of the membrane; it reads SSYCMDVITSKILKTLKLEYLRSVFYQDGQFHDNNPGSKLRSDLDFYLEQVSSGIGT. Residues 169 to 189 form a helical membrane-spanning segment; it reads KFITIFTYASSFLGLYIWSLI. The Vacuolar portion of the chain corresponds to 190-191; the sequence is KN. A helical transmembrane segment spans residues 192 to 212; sequence ARLTLCITCVFPLIYVCGVIC. Topologically, residues 213–275 are cytoplasmic; that stretch reads NKKVKLNKKT…KYILKANFVE (63 aa). The chain crosses the membrane as a helical span at residues 276–296; sequence ALHIGLINGLILVSYAFGFWY. Topologically, residues 297 to 316 are vacuolar; sequence GTRIIINSATNQYPNNDFNG. The helical transmembrane segment at 317–337 threads the bilayer; it reads ASVISILLGVLISMFMLTIIL. The Cytoplasmic segment spans residues 338 to 788; sequence PNITEYMKAL…YKEIFSYKKD (451 aa). Residues 378–662 form the ABC transporter 1 domain; it reads IEFKNVRFHY…NNNNNNNNNK (285 aa). ATP contacts are provided by Y387, T389, R390, S415, C417, G418, K419, S420, T421, Q462, K562, S564, G566, and Q567. Q462 contacts Mg(2+). Disordered regions lie at residues 639–665 and 697–752; these read ERSD…KINN and SSNK…TAEN. 2 stretches are compositionally biased toward low complexity: residues 643-665 and 697-715; these read NNNN…KINN and SSNK…NKSS. Over residues 723-749 the composition is skewed to polar residues; the sequence is GNDADNMNSLSIHENENISNNRNCKNT. The helical transmembrane segment at 789–809 threads the bilayer; sequence VTIIFFSILVAGGLYPVFALL. Positions 791–1083 constitute an ABC transmembrane type-1 2 domain; the sequence is IIFFSILVAG…GSYAGKLMSL (293 aa). The Vacuolar segment spans residues 810-829; sequence YARYVSTLFDFANLEYNSNK. The helical transmembrane segment at 830–850 threads the bilayer; it reads YSIYILLIAIAMFISETLKNY. The Cytoplasmic portion of the chain corresponds to 851–907; sequence YNNKIGEKVEKTMKRRLFENILYQEMSFFDQDKNTPGVLSAHINRDVHLLKTGLVNN. A run of 2 helical transmembrane segments spans residues 908-928 and 929-949; these read IVIF…SFYF and CPIV…VFAV. Residues 950 to 1032 lie on the Cytoplasmic side of the membrane; it reads RARLTKSKEI…RIIVNAALWG (83 aa). Residues 1033 to 1053 form a helical membrane-spanning segment; that stretch reads FSQSAQLFINSFAYWFGSFLI. The Vacuolar portion of the chain corresponds to 1054 to 1057; that stretch reads KRGT. Residues 1058 to 1078 traverse the membrane as a helical segment; sequence ILVDDFMKSLFTFIFTGSYAG. At 1079–1419 the chain is on the cytoplasmic side; sequence KLMSLKGDSE…IYKKYVKLAK (341 aa). Positions 1126-1416 constitute an ABC transporter 2 domain; it reads VDIKDVNFRY…QDGIYKKYVK (291 aa). Y1135, R1138, T1163, G1164, G1166, K1167, S1168, T1169, Q1256, L1312, S1313, G1315, and Q1316 together coordinate ATP. S1168 is a Mg(2+) binding site. Q1256 lines the Mg(2+) pocket.

Belongs to the ABC transporter superfamily. ABCB family. Multidrug resistance exporter (TC 3.A.1.201) subfamily.

The protein localises to the vacuole membrane. It carries out the reaction ATP + H2O + xenobioticSide 1 = ADP + phosphate + xenobioticSide 2.. Its function is as follows. Energy-dependent efflux pump responsible for decreased drug accumulation in multidrug-resistant cells. Transports lumefantrine, mefloquine, chloroquine, quinine, quinidine, amodiaquine, piperaquine, dihydroartemisinin and quinacrine. This Plasmodium falciparum (isolate 3D7) protein is Multidrug resistance protein 1.